The sequence spans 166 residues: Putative protein PTGES3L (166 aa).

One can recognise a CS domain in the interval 46 to 154 (RQHARTLWYD…RPPPAMDDLD (109 aa)). The interval 142–166 (STKRPPPAMDDLDDDSDSADDATSN) is disordered. Acidic residues predominate over residues 151–166 (DDLDDDSDSADDATSN).

Belongs to the p23/wos2 family.

This chain is Putative protein PTGES3L, found in Homo sapiens (Human).